The primary structure comprises 1342 residues: DNA-directed RNA polymerase subunit beta (1342 aa).

Belongs to the RNA polymerase beta chain family. As to quaternary structure, the RNAP catalytic core consists of 2 alpha, 1 beta, 1 beta' and 1 omega subunit. When a sigma factor is associated with the core the holoenzyme is formed, which can initiate transcription.

The enzyme catalyses RNA(n) + a ribonucleoside 5'-triphosphate = RNA(n+1) + diphosphate. Its function is as follows. DNA-dependent RNA polymerase catalyzes the transcription of DNA into RNA using the four ribonucleoside triphosphates as substrates. The sequence is that of DNA-directed RNA polymerase subunit beta from Yersinia pseudotuberculosis serotype O:1b (strain IP 31758).